A 537-amino-acid chain; its full sequence is MSLEDESFPADELFEQLNSASIGASRQFKSQFGEHDQPEAFERNPAPFLTSDCSDESSFIDAANKSAKTCVSDPVGLDQCEEEEEVDKDFEDSALANGNSELQIKSARSSKSVSYQDIHSAHTKRRYKHVTSKVAKYIADIHAQDQQRRNATKKFQRHSSMPEYLTPTARERGAHFSVDELHNLDESLDNSSAGNITDAKTPNDSYERLLSENERLQNDKEDLKSYSDYLQTKLDEKAMENMQLRRNFDVLRTDLTDCKEKLKRNQSYSLRSLNFCPPASVPKATQTDHELLSHAPNISRLSNMVAIADSGTPLPGSNTNNLTYDSSAGSIEVALLSVAPAARQPNAGKPKKNIQPHSLDFSNDSTEAEPNGNGTTSTGHSSSRAITSRRGAAPNNSESSHPSSNDSAIEVEALDLRSPYHRQPQGSIYPPMQDWGHSDGIYFFDKRNSRVIEVRSINVSQSSNPEQNSGTSETNLLNQSHVQFRHKRTSMGTRMLRLLGPCVRCTDTNQSVNASSATYTIGLPLLREEYGGRHTDR.

The segment at 344–406 (QPNAGKPKKN…SESSHPSSND (63 aa)) is disordered. Composition is skewed to low complexity over residues 371 to 383 (NGNGTTSTGHSSS) and 392 to 406 (AAPNNSESSHPSSND).

In terms of assembly, may be constituted of a homo- or heterodimer.

Its subcellular location is the nucleus. Has a role in localizing bicoid mRNA at the anterior margin of the oocyte during oogenesis, and a poorly characterized role in nuclear divisions in early embryogenesis. This is Protein swallow (swa) from Drosophila pseudoobscura pseudoobscura (Fruit fly).